We begin with the raw amino-acid sequence, 163 residues long: CASP-like protein 1C2 (163 aa).

Residues 1-6 are Cytoplasmic-facing; the sequence is MAKSNK. The chain crosses the membrane as a helical span at residues 7-27; that stretch reads IFTNTLRLLALAATVVAIVFM. The Extracellular portion of the chain corresponds to 28 to 52; it reads VTSHDSAQVLNLTFTAKYSNTPAFK. N-linked (GlcNAc...) asparagine glycosylation occurs at Asn-38. The helical transmembrane segment at 53–73 threads the bilayer; sequence FLVIGEAIAGGYTVISILLSF. The Cytoplasmic portion of the chain corresponds to 74–79; it reads KGLFWR. A helical transmembrane segment spans residues 80–100; that stretch reads LIVILDMVTTVLLTSSISAAL. The Extracellular portion of the chain corresponds to 101–128; it reads AIAQVGKKGNTHAGWLPICGQVPDFCDY. Residues 129 to 149 traverse the membrane as a helical segment; it reads VTIALIAGFAAAIIYFVLLLC. The Cytoplasmic portion of the chain corresponds to 150 to 163; the sequence is SLYVVLSPIFVATP.

Belongs to the Casparian strip membrane proteins (CASP) family. Homodimer and heterodimers.

It is found in the cell membrane. This Populus trichocarpa (Western balsam poplar) protein is CASP-like protein 1C2.